A 212-amino-acid chain; its full sequence is Putative tyrosine-protein phosphatase R622 (212 aa).

The region spanning 9 to 191 (KISQVTNNIF…LQGYQSKKEN (183 aa)) is the Tyrosine-protein phosphatase domain. C135 functions as the Phosphocysteine intermediate in the catalytic mechanism.

It belongs to the protein-tyrosine phosphatase family. Non-receptor class dual specificity subfamily.

It catalyses the reaction O-phospho-L-tyrosyl-[protein] + H2O = L-tyrosyl-[protein] + phosphate. The polypeptide is Putative tyrosine-protein phosphatase R622 (Acanthamoeba polyphaga mimivirus (APMV)).